Consider the following 500-residue polypeptide: Catalase (500 aa).

Catalysis depends on residues His59 and Asn131. Tyr339 is a heme binding site.

This sequence belongs to the catalase family. The cofactor is heme.

The enzyme catalyses 2 H2O2 = O2 + 2 H2O. Functionally, decomposes hydrogen peroxide into water and oxygen; serves to protect cells from the toxic effects of hydrogen peroxide. The chain is Catalase (katA) from Neisseria gonorrhoeae.